The chain runs to 210 residues: MAEAAESAPAPPPAEPAAKKKKQQPKKAAAARGAAKSKKPSSGPSVSEQIVTAVSASKERSGVSLAALKKTLAAGGYDVDKNNSRLKLALKVTKETLLQVKGSGASGSFKLNKKQLQSKDKAAAKKKAPLAAEAKKPAAAAKKTAKSPKKPKKVSAAAKSPKKLKKPAKAAKSPAKKTAVKPKVAAKSPAKAKAAKPKVAKAKKAAPKKK.

Disordered regions lie at residues 1-49 (MAEA…VSEQ) and 101-210 (KGSG…PKKK). 2 stretches are compositionally biased toward low complexity: residues 26–45 (KKAA…SGPS) and 129–142 (PLAA…AAAK). Residues 42–113 (SGPSVSEQIV…GASGSFKLNK (72 aa)) form the H15 domain. Composition is skewed to basic residues over residues 143-153 (KTAKSPKKPKK) and 160-180 (SPKK…KTAV). Positions 181–192 (KPKVAAKSPAKA) are enriched in low complexity. The segment covering 193–210 (KAAKPKVAKAKKAAPKKK) has biased composition (basic residues).

It belongs to the histone H1/H5 family.

The protein resides in the nucleus. It localises to the chromosome. In terms of biological role, histones H1 are necessary for the condensation of nucleosome chains into higher-order structures. This is Histone H1A from Xenopus laevis (African clawed frog).